The chain runs to 425 residues: Enolase (425 aa).

Q162 serves as a coordination point for (2R)-2-phosphoglycerate. E204 functions as the Proton donor in the catalytic mechanism. Residues D241, E282, and D309 each coordinate Mg(2+). Positions 334, 363, 364, and 385 each coordinate (2R)-2-phosphoglycerate. K334 serves as the catalytic Proton acceptor.

The protein belongs to the enolase family. Mg(2+) is required as a cofactor.

Its subcellular location is the cytoplasm. It is found in the secreted. The protein localises to the cell surface. It carries out the reaction (2R)-2-phosphoglycerate = phosphoenolpyruvate + H2O. The protein operates within carbohydrate degradation; glycolysis; pyruvate from D-glyceraldehyde 3-phosphate: step 4/5. Catalyzes the reversible conversion of 2-phosphoglycerate (2-PG) into phosphoenolpyruvate (PEP). It is essential for the degradation of carbohydrates via glycolysis. The protein is Enolase of Corynebacterium urealyticum (strain ATCC 43042 / DSM 7109).